The sequence spans 83 residues: UPF0457 protein YnzG (83 aa).

The protein belongs to the UPF0457 family.

The sequence is that of UPF0457 protein YnzG (ynzG) from Bacillus subtilis (strain 168).